Here is a 458-residue protein sequence, read N- to C-terminus: Bifunctional protein GlmU (458 aa).

The pyrophosphorylase stretch occupies residues 1 to 230 (MHKRTAVVLA…EREILGINSR (230 aa)). Residues 9 to 12 (LAAG), K23, Q73, and 78 to 79 (GT) each bind UDP-N-acetyl-alpha-D-glucosamine. A Mg(2+)-binding site is contributed by D103. Residues G140, E155, N170, and N228 each coordinate UDP-N-acetyl-alpha-D-glucosamine. N228 is a Mg(2+) binding site. The linker stretch occupies residues 231–251 (VQLAEAEAVLQDRLRRKWMDA). The tract at residues 252–458 (GVTLIDPPSV…FLGRKHKGSQ (207 aa)) is N-acetyltransferase. R333 and K351 together coordinate UDP-N-acetyl-alpha-D-glucosamine. The Proton acceptor role is filled by H363. 2 residues coordinate UDP-N-acetyl-alpha-D-glucosamine: Y366 and N377. Acetyl-CoA contacts are provided by residues A380, 386–387 (NY), S405, A423, and R440.

This sequence in the N-terminal section; belongs to the N-acetylglucosamine-1-phosphate uridyltransferase family. It in the C-terminal section; belongs to the transferase hexapeptide repeat family. Homotrimer. Requires Mg(2+) as cofactor.

It is found in the cytoplasm. It carries out the reaction alpha-D-glucosamine 1-phosphate + acetyl-CoA = N-acetyl-alpha-D-glucosamine 1-phosphate + CoA + H(+). The catalysed reaction is N-acetyl-alpha-D-glucosamine 1-phosphate + UTP + H(+) = UDP-N-acetyl-alpha-D-glucosamine + diphosphate. It participates in nucleotide-sugar biosynthesis; UDP-N-acetyl-alpha-D-glucosamine biosynthesis; N-acetyl-alpha-D-glucosamine 1-phosphate from alpha-D-glucosamine 6-phosphate (route II): step 2/2. It functions in the pathway nucleotide-sugar biosynthesis; UDP-N-acetyl-alpha-D-glucosamine biosynthesis; UDP-N-acetyl-alpha-D-glucosamine from N-acetyl-alpha-D-glucosamine 1-phosphate: step 1/1. The protein operates within bacterial outer membrane biogenesis; LPS lipid A biosynthesis. Catalyzes the last two sequential reactions in the de novo biosynthetic pathway for UDP-N-acetylglucosamine (UDP-GlcNAc). The C-terminal domain catalyzes the transfer of acetyl group from acetyl coenzyme A to glucosamine-1-phosphate (GlcN-1-P) to produce N-acetylglucosamine-1-phosphate (GlcNAc-1-P), which is converted into UDP-GlcNAc by the transfer of uridine 5-monophosphate (from uridine 5-triphosphate), a reaction catalyzed by the N-terminal domain. The chain is Bifunctional protein GlmU from Heliobacterium modesticaldum (strain ATCC 51547 / Ice1).